Here is a 712-residue protein sequence, read N- to C-terminus: Polyribonucleotide nucleotidyltransferase (712 aa).

Positions 487 and 493 each coordinate Mg(2+). The region spanning 554–613 is the KH domain; the sequence is PRIEVMNIPVDKIREVIGSGGKVIREIVEKTGAKINIEDDGTVKIASSSGKEIEAARKWI. The 69-residue stretch at 623 to 691 folds into the S1 motif domain; sequence GQIYEGTVVK…ERGKVRLSMK (69 aa).

Belongs to the polyribonucleotide nucleotidyltransferase family. Mg(2+) is required as a cofactor.

It is found in the cytoplasm. The catalysed reaction is RNA(n+1) + phosphate = RNA(n) + a ribonucleoside 5'-diphosphate. Its function is as follows. Involved in mRNA degradation. Catalyzes the phosphorolysis of single-stranded polyribonucleotides processively in the 3'- to 5'-direction. The chain is Polyribonucleotide nucleotidyltransferase from Rhizobium etli (strain CIAT 652).